An 81-amino-acid chain; its full sequence is Putative defensin-like protein 31 (81 aa).

A signal peptide spans 1–26 (MTSSSKCLFFVFLCLAALLTPYLAEA). Intrachain disulfides connect Cys-38–Cys-58, Cys-44–Cys-70, and Cys-48–Cys-72.

The protein belongs to the DEFL family.

It localises to the secreted. This chain is Putative defensin-like protein 31, found in Arabidopsis thaliana (Mouse-ear cress).